The following is a 1163-amino-acid chain: Protein phosphatase 1 regulatory subunit 26 (1163 aa).

Over residues 65–83 the composition is skewed to basic and acidic residues; that stretch reads HERLTQRGQRAERSRDTRL. Disordered stretches follow at residues 65–91, 144–253, 266–393, 463–496, 514–653, 672–929, and 1073–1163; these read HERLTQRGQRAERSRDTRLAPKPAVCK, RGGA…TSAR, RKPP…KKKL, APMEGSDRPPSRNPLFCPQPMPPRSEGDSSNIDS, VGSP…DEDL, RDPR…TATA, and TQPG…GLKL. 2 stretches are compositionally biased toward polar residues: residues 163–179 and 189–201; these read HSSTLPIPCPSQLTPGS and DQGSTSPASMSSE. Over residues 208 to 236 the composition is skewed to basic and acidic residues; that stretch reads IRAEIEQFLNEKRQHENPKCDGFVDKKSD. Residues 273-297 are compositionally biased toward polar residues; sequence KMSTQQRNFQPKPTTEPETPVSTKL. Over residues 315 to 324 the composition is skewed to basic residues; the sequence is MPARRSKRIR. Low complexity predominate over residues 515–535; sequence GSPQPAQGPLSSPGPSGQPGI. Basic and acidic residues-rich tracts occupy residues 566-581 and 634-645; these read KIREGRESTQDADHIQ and ATEKESSEDKSS. Residues 672-682 show a composition bias toward basic residues; that stretch reads RDPRASCKKVR. Low complexity predominate over residues 766-780; sequence TGASGHPPSASSPTS. Residues 783 to 792 show a composition bias toward acidic residues; the sequence is SAVDSDDSIE. Composition is skewed to basic and acidic residues over residues 793-808 and 850-859; these read LEIRRFLAEKAKESIR and EGRRGPERAR. Polar residues predominate over residues 860 to 871; it reads TQATGLLSQSGK. The span at 901–910 shows a compositional bias: low complexity; that stretch reads SSAKASPPSR. Positions 1105-1131 are enriched in basic and acidic residues; sequence QQDRRNSASEDKVLDLRYRHRVDREPQ. The residue at position 1111 (serine 1111) is a Phosphoserine. Composition is skewed to polar residues over residues 1133-1146 and 1154-1163; these read QETLGSDASEFSDT and ATVSSKGLKL.

Interacts with UTP20 and PPP1CA.

It is found in the nucleus. The protein localises to the nucleolus. In terms of biological role, inhibits phosphatase activity of protein phosphatase 1 (PP1) complexes. May positively regulate cell proliferation. This Mus musculus (Mouse) protein is Protein phosphatase 1 regulatory subunit 26 (Ppp1r26).